We begin with the raw amino-acid sequence, 125 residues long: Protein ApaG (125 aa).

Residues 1–125 (MIDSPRVCVQ…FRLAVPTFIH (125 aa)) enclose the ApaG domain.

The protein is Protein ApaG of Enterobacter sp. (strain 638).